The following is a 276-amino-acid chain: 2,3,4,5-tetrahydropyridine-2,6-dicarboxylate N-succinyltransferase (276 aa).

2 residues coordinate substrate: Arg-104 and Asp-141.

This sequence belongs to the transferase hexapeptide repeat family. Homotrimer.

The protein localises to the cytoplasm. The catalysed reaction is (S)-2,3,4,5-tetrahydrodipicolinate + succinyl-CoA + H2O = (S)-2-succinylamino-6-oxoheptanedioate + CoA. It functions in the pathway amino-acid biosynthesis; L-lysine biosynthesis via DAP pathway; LL-2,6-diaminopimelate from (S)-tetrahydrodipicolinate (succinylase route): step 1/3. This chain is 2,3,4,5-tetrahydropyridine-2,6-dicarboxylate N-succinyltransferase, found in Legionella pneumophila (strain Paris).